The primary structure comprises 312 residues: Homoserine O-acetyltransferase (312 aa).

Catalysis depends on Cys-142, which acts as the Acyl-thioester intermediate. Lys-163 and Ser-192 together coordinate substrate. His-235 serves as the catalytic Proton acceptor. Glu-237 is an active-site residue. Arg-249 lines the substrate pocket.

The protein belongs to the MetA family.

It is found in the cytoplasm. It carries out the reaction L-homoserine + acetyl-CoA = O-acetyl-L-homoserine + CoA. Its pathway is amino-acid biosynthesis; L-methionine biosynthesis via de novo pathway; O-acetyl-L-homoserine from L-homoserine: step 1/1. Functionally, transfers an acetyl group from acetyl-CoA to L-homoserine, forming acetyl-L-homoserine. The protein is Homoserine O-acetyltransferase of Ruegeria sp. (strain TM1040) (Silicibacter sp.).